Consider the following 85-residue polypeptide: NAD(P)H-quinone oxidoreductase subunit O (85 aa).

Belongs to the complex I NdhO subunit family. As to quaternary structure, NDH-1 can be composed of about 15 different subunits; different subcomplexes with different compositions have been identified which probably have different functions.

It localises to the cellular thylakoid membrane. The catalysed reaction is a plastoquinone + NADH + (n+1) H(+)(in) = a plastoquinol + NAD(+) + n H(+)(out). The enzyme catalyses a plastoquinone + NADPH + (n+1) H(+)(in) = a plastoquinol + NADP(+) + n H(+)(out). Functionally, NDH-1 shuttles electrons from an unknown electron donor, via FMN and iron-sulfur (Fe-S) centers, to quinones in the respiratory and/or the photosynthetic chain. The immediate electron acceptor for the enzyme in this species is believed to be plastoquinone. Couples the redox reaction to proton translocation, and thus conserves the redox energy in a proton gradient. Cyanobacterial NDH-1 also plays a role in inorganic carbon-concentration. The polypeptide is NAD(P)H-quinone oxidoreductase subunit O (Synechococcus sp. (strain WH7803)).